Here is a 779-residue protein sequence, read N- to C-terminus: Aconitate hydratase, mitochondrial (779 aa).

The N-terminal 28 residues, 1-28 (MIAMDRIARIPIARWTSRAFRVSAAARQ), are a transit peptide targeting the mitochondrion. Substrate-binding positions include glutamine 97 and 190–192 (DSH). Positions 383, 446, and 449 each coordinate [4Fe-4S] cluster. Substrate contacts are provided by residues arginine 472, arginine 477, arginine 605, and 668-669 (SR).

This sequence belongs to the aconitase/IPM isomerase family. As to quaternary structure, monomer. Requires [4Fe-4S] cluster as cofactor.

It is found in the mitochondrion. It catalyses the reaction citrate = D-threo-isocitrate. The protein operates within carbohydrate metabolism; tricarboxylic acid cycle; isocitrate from oxaloacetate: step 2/2. Functionally, catalyzes the isomerization of citrate to isocitrate via cis-aconitate. In Gracilaria gracilis (Red alga), this protein is Aconitate hydratase, mitochondrial.